We begin with the raw amino-acid sequence, 561 residues long: Dihydroxy-acid dehydratase (561 aa).

Aspartate 80 lines the Mg(2+) pocket. Cysteine 121 lines the [2Fe-2S] cluster pocket. Residues aspartate 122 and lysine 123 each contribute to the Mg(2+) site. Position 123 is an N6-carboxylysine (lysine 123). Cysteine 194 is a [2Fe-2S] cluster binding site. Glutamate 448 serves as a coordination point for Mg(2+). The Proton acceptor role is filled by serine 474.

The protein belongs to the IlvD/Edd family. In terms of assembly, homodimer. Requires [2Fe-2S] cluster as cofactor. It depends on Mg(2+) as a cofactor.

The catalysed reaction is (2R)-2,3-dihydroxy-3-methylbutanoate = 3-methyl-2-oxobutanoate + H2O. The enzyme catalyses (2R,3R)-2,3-dihydroxy-3-methylpentanoate = (S)-3-methyl-2-oxopentanoate + H2O. The protein operates within amino-acid biosynthesis; L-isoleucine biosynthesis; L-isoleucine from 2-oxobutanoate: step 3/4. It functions in the pathway amino-acid biosynthesis; L-valine biosynthesis; L-valine from pyruvate: step 3/4. Its function is as follows. Functions in the biosynthesis of branched-chain amino acids. Catalyzes the dehydration of (2R,3R)-2,3-dihydroxy-3-methylpentanoate (2,3-dihydroxy-3-methylvalerate) into 2-oxo-3-methylpentanoate (2-oxo-3-methylvalerate) and of (2R)-2,3-dihydroxy-3-methylbutanoate (2,3-dihydroxyisovalerate) into 2-oxo-3-methylbutanoate (2-oxoisovalerate), the penultimate precursor to L-isoleucine and L-valine, respectively. The chain is Dihydroxy-acid dehydratase from Anaeromyxobacter sp. (strain Fw109-5).